Reading from the N-terminus, the 479-residue chain is RAC-gamma serine/threonine-protein kinase (479 aa).

Serine 2 is modified (N-acetylserine). Residues 5–107 (TIVKEDWVQK…WTEAIQAVAD (103 aa)) enclose the PH domain. The cysteines at positions 59 and 76 are disulfide-linked. One can recognise a Protein kinase domain in the interval 148–405 (FDYLKLLGKG…PKEIMRHSFF (258 aa)). ATP-binding positions include 154–162 (LGKGTFGKV) and lysine 177. Aspartate 271 (proton acceptor) is an active-site residue. The cysteines at positions 293 and 307 are disulfide-linked. Threonine 302 carries an O-linked (GlcNAc) threonine glycan. A Phosphothreonine; by PDPK1 modification is found at threonine 305. Threonine 309 is a glycosylation site (O-linked (GlcNAc) threonine). One can recognise an AGC-kinase C-terminal domain in the interval 406 to 479 (SGVNWQDVYD…QFSYSASGRE (74 aa)). The interval 446–479 (ITPPEKDDDDGMDCMDNERRPHFPQFSYSASGRE) is disordered. Threonine 447 is modified (phosphothreonine). The segment covering 451–460 (KDDDDGMDCM) has biased composition (acidic residues). Serine 472 carries the post-translational modification Phosphoserine; by PKC/PRKCZ. A glycan (O-linked (GlcNAc) serine; alternate) is linked at serine 472.

The protein belongs to the protein kinase superfamily. AGC Ser/Thr protein kinase family. RAC subfamily. As to quaternary structure, interacts (via PH domain) with TCL1A; this enhances AKT3 phosphorylation and activation. Interacts with TRAF6. Interacts with KCTD20. Interacts with BTBD10. In terms of processing, phosphorylation on Thr-305 and Ser-472 is required for full activity. Phosphorylation of the activation loop at Thr-305 by PDPK1/PDK1 is a prerequisite for full activation. Phosphorylation at Ser-472 by mTORC2 in response to growth factors plays a key role in AKT1 activation by facilitating subsequent phosphorylation of the activation loop by PDPK1/PDK1. Ubiquitinated. When fully phosphorylated and translocated into the nucleus, undergoes 'Lys-48'-polyubiquitination catalyzed by TTC3, leading to its degradation by the proteasome. Post-translationally, O-GlcNAcylation at Thr-302 and Thr-309 inhibits activating phosphorylation at Thr-305 via disrupting the interaction between AKT and PDPK1/PDK1.

It localises to the nucleus. The protein resides in the cytoplasm. The protein localises to the membrane. The catalysed reaction is L-seryl-[protein] + ATP = O-phospho-L-seryl-[protein] + ADP + H(+). The enzyme catalyses L-threonyl-[protein] + ATP = O-phospho-L-threonyl-[protein] + ADP + H(+). With respect to regulation, two specific sites, one in the kinase domain (Thr-305) and the other in the C-terminal regulatory region (Ser-472), need to be phosphorylated for its full activation. IGF-1 leads to the activation of AKT3, which may play a role in regulating cell survival. Functionally, AKT3 is one of 3 closely related serine/threonine-protein kinases (AKT1, AKT2 and AKT3) called the AKT kinase, and which regulate many processes including metabolism, proliferation, cell survival, growth and angiogenesis. This is mediated through serine and/or threonine phosphorylation of a range of downstream substrates. Over 100 substrate candidates have been reported so far, but for most of them, no isoform specificity has been reported. AKT3 is the least studied AKT isoform. It plays an important role in brain development and is crucial for the viability of malignant glioma cells. AKT3 isoform may also be the key molecule in up-regulation and down-regulation of MMP13 via IL13. Required for the coordination of mitochondrial biogenesis with growth factor-induced increases in cellular energy demands. Down-regulation by RNA interference reduces the expression of the phosphorylated form of BAD, resulting in the induction of caspase-dependent apoptosis. In Rattus norvegicus (Rat), this protein is RAC-gamma serine/threonine-protein kinase (Akt3).